Reading from the N-terminus, the 492-residue chain is GMP reductase (492 aa).

NADP(+)-binding positions include 30–31 and Arg78; that span reads SR. CBS domains follow at residues 99–162 and 164–223; these read LIED…LVET and MTPV…RNAT. NADP(+)-binding positions include 260 to 262 and 313 to 314; these read DIA and VG. Gly314, Gly316, and Cys319 together coordinate K(+). The Thioimidate intermediate role is filled by Cys319. Catalysis depends on Thr321, which acts as the Proton donor/acceptor. Residue Arg322 coordinates K(+). GMP-binding positions include 352–354, 375–376, and 401–403; these read DGG, GN, and GMA. NADP(+)-binding positions include Met402 and 454-457; that span reads SGIS. The Microbody targeting signal motif lies at 490-492; that stretch reads SKL.

It belongs to the IMPDH/GMPR family. GuaC type 1 subfamily. As to quaternary structure, homotetramer.

The protein resides in the glycosome. It carries out the reaction IMP + NH4(+) + NADP(+) = GMP + NADPH + 2 H(+). Activated by GTP and inhibited by XMP and the IMP analogs allopurinol nucleotide and thiopurinol nucleotide. Its function is as follows. Catalyzes the irreversible NADPH-dependent deamination of GMP to IMP. It functions in the conversion of nucleobase, nucleoside and nucleotide derivatives of G to A nucleotides, and in maintaining the intracellular balance of A and G nucleotides. This Leishmania donovani protein is GMP reductase.